A 314-amino-acid chain; its full sequence is Olfactory receptor 1E1 (314 aa).

The Extracellular segment spans residues Met-1 to Asn-25. N-linked (GlcNAc...) asparagine glycosylation is present at Asn-5. A helical membrane pass occupies residues Leu-26–Ile-49. Residues Arg-50–Thr-57 lie on the Cytoplasmic side of the membrane. Residues Pro-58 to Pro-79 form a helical membrane-spanning segment. The Extracellular segment spans residues Lys-80–Gln-100. Cysteines 97 and 189 form a disulfide. Residues Met-101–Tyr-120 traverse the membrane as a helical segment. Residues Asp-121–Met-139 are Cytoplasmic-facing. Residues Leu-140–Leu-158 traverse the membrane as a helical segment. Over His-159–Asn-195 the chain is Extracellular. A helical membrane pass occupies residues Glu-196 to Ala-219. At Arg-220–Lys-236 the chain is on the cytoplasmic side. Residues Ala-237–Tyr-259 form a helical membrane-spanning segment. Residues Leu-260 to Thr-272 are Extracellular-facing. A helical membrane pass occupies residues Val-273–Leu-292. Residues Arg-293–Leu-314 lie on the Cytoplasmic side of the membrane.

It belongs to the G-protein coupled receptor 1 family.

It is found in the cell membrane. In terms of biological role, odorant receptor. The polypeptide is Olfactory receptor 1E1 (OR1E1) (Gorilla gorilla gorilla (Western lowland gorilla)).